Reading from the N-terminus, the 225-residue chain is Uracil-DNA glycosylase (225 aa).

The active-site Proton acceptor is the D65.

Belongs to the uracil-DNA glycosylase (UDG) superfamily. UNG family.

The protein resides in the cytoplasm. The catalysed reaction is Hydrolyzes single-stranded DNA or mismatched double-stranded DNA and polynucleotides, releasing free uracil.. Functionally, excises uracil residues from the DNA which can arise as a result of misincorporation of dUMP residues by DNA polymerase or due to deamination of cytosine. This chain is Uracil-DNA glycosylase, found in Bacillus cereus (strain ATCC 10987 / NRS 248).